Reading from the N-terminus, the 76-residue chain is Small ribosomal subunit protein bS18 (76 aa).

This sequence belongs to the bacterial ribosomal protein bS18 family. In terms of assembly, part of the 30S ribosomal subunit. Forms a tight heterodimer with protein bS6.

Its function is as follows. Binds as a heterodimer with protein bS6 to the central domain of the 16S rRNA, where it helps stabilize the platform of the 30S subunit. In Pseudomonas aeruginosa (strain LESB58), this protein is Small ribosomal subunit protein bS18.